A 202-amino-acid polypeptide reads, in one-letter code: MARYTGPKARINRRLGTMLYETAGAARAMDRRPQPPGMHTRGRRPSNYGAALMEKQKIKHYYGLGERQLRRYFENVGRKSGNTGELLLLMCERRLDNVVRRVGFTKTRPQARQGITHGHFRVNGVKVTKPGYMLRAGDLIEVRGRENLKNLYRGVIANSPPDGLDWVSFDSETLRATVLSLPGAVDISLPVDANSVVEFLSR.

The region spanning 93-155 (RRLDNVVRRV…ENLKNLYRGV (63 aa)) is the S4 RNA-binding domain.

The protein belongs to the universal ribosomal protein uS4 family. Part of the 30S ribosomal subunit. Contacts protein S5. The interaction surface between S4 and S5 is involved in control of translational fidelity.

Its function is as follows. One of the primary rRNA binding proteins, it binds directly to 16S rRNA where it nucleates assembly of the body of the 30S subunit. In terms of biological role, with S5 and S12 plays an important role in translational accuracy. This is Small ribosomal subunit protein uS4 from Rhodopirellula baltica (strain DSM 10527 / NCIMB 13988 / SH1).